The primary structure comprises 426 residues: 3-isopropylmalate dehydratase large subunit (426 aa).

The [4Fe-4S] cluster site is built by Cys307, Cys367, and Cys370.

It belongs to the aconitase/IPM isomerase family. LeuC type 2 subfamily. In terms of assembly, heterodimer of LeuC and LeuD. It depends on [4Fe-4S] cluster as a cofactor.

The enzyme catalyses (2R,3S)-3-isopropylmalate = (2S)-2-isopropylmalate. It functions in the pathway amino-acid biosynthesis; L-leucine biosynthesis; L-leucine from 3-methyl-2-oxobutanoate: step 2/4. Its function is as follows. Catalyzes the isomerization between 2-isopropylmalate and 3-isopropylmalate, via the formation of 2-isopropylmaleate. The sequence is that of 3-isopropylmalate dehydratase large subunit from Aliarcobacter butzleri (strain RM4018) (Arcobacter butzleri).